Consider the following 346-residue polypeptide: Structure-specific endonuclease subunit SLX1 (346 aa).

A GIY-YIG domain is found at 10 to 92; that stretch reads ALYCVYILRS…TNPHTSLHIP (83 aa). Residues 238–296 form an SLX1-type zinc finger; that stretch reads CVVCKEEIDPEEGGLHAVCSNEGCEGVGHLRCWGRYLLKSEEGGGEGAILPVGGRCPRC. Residues 324–336 show a composition bias toward basic residues; sequence KVKRKRAPRKKTA. Positions 324-346 are disordered; it reads KVKRKRAPRKKTAKTKETREEDG. A compositionally biased stretch (basic and acidic residues) spans 337 to 346; it reads KTKETREEDG.

It belongs to the SLX1 family. As to quaternary structure, forms a heterodimer with SLX4. A divalent metal cation is required as a cofactor.

The protein resides in the nucleus. Catalytic subunit of the SLX1-SLX4 structure-specific endonuclease that resolves DNA secondary structures generated during DNA repair and recombination. Has endonuclease activity towards branched DNA substrates, introducing single-strand cuts in duplex DNA close to junctions with ss-DNA. This Podospora anserina (strain S / ATCC MYA-4624 / DSM 980 / FGSC 10383) (Pleurage anserina) protein is Structure-specific endonuclease subunit SLX1.